The chain runs to 135 residues: uncharacterized protein (135 aa).

Helical transmembrane passes span 4–24, 26–46, 68–88, and 93–113; these read IIICIKLGVVFLGTLFTWIFG, WDMPIVTLLVFIFLDYLTGVI, LILVVLLVAVMLDRLLDNGAW, and LIAYFYIMNEGISILENCAAL.

The protein belongs to the bacteriophage holin family. Cp-1 holin subfamily.

The protein resides in the cell membrane. This is an uncharacterized protein from Clostridium perfringens (strain 13 / Type A).